The sequence spans 441 residues: Glutamyl-tRNA reductase (441 aa).

Substrate is bound by residues 49-52 (TCNR), Ser-109, 114-116 (EGQ), and Gln-120. The active-site Nucleophile is Cys-50. 198-203 (GAGRMS) contributes to the NADP(+) binding site.

This sequence belongs to the glutamyl-tRNA reductase family. As to quaternary structure, homodimer.

It carries out the reaction (S)-4-amino-5-oxopentanoate + tRNA(Glu) + NADP(+) = L-glutamyl-tRNA(Glu) + NADPH + H(+). The protein operates within porphyrin-containing compound metabolism; protoporphyrin-IX biosynthesis; 5-aminolevulinate from L-glutamyl-tRNA(Glu): step 1/2. Its pathway is porphyrin-containing compound metabolism; chlorophyll biosynthesis. Functionally, catalyzes the NADPH-dependent reduction of glutamyl-tRNA(Glu) to glutamate 1-semialdehyde (GSA). This Prochlorococcus marinus (strain NATL1A) protein is Glutamyl-tRNA reductase.